An 81-amino-acid chain; its full sequence is Acyl carrier protein (81 aa).

The region spanning 1–79 (MDREEILQKI…EAVDYVVEHQ (79 aa)) is the Carrier domain. Residue Ser-39 is modified to O-(pantetheine 4'-phosphoryl)serine.

Belongs to the acyl carrier protein (ACP) family. Post-translationally, 4'-phosphopantetheine is transferred from CoA to a specific serine of apo-ACP by AcpS. This modification is essential for activity because fatty acids are bound in thioester linkage to the sulfhydryl of the prosthetic group.

The protein localises to the cytoplasm. It participates in lipid metabolism; fatty acid biosynthesis. In terms of biological role, carrier of the growing fatty acid chain in fatty acid biosynthesis. The polypeptide is Acyl carrier protein (Rubrobacter xylanophilus (strain DSM 9941 / JCM 11954 / NBRC 16129 / PRD-1)).